We begin with the raw amino-acid sequence, 127 residues long: Protein chibby homolog 1 (127 aa).

Over residues 1 to 10 (MPLFGSTFSP) the composition is skewed to polar residues. The disordered stretch occupies residues 1–26 (MPLFGSTFSPKKTPPRKSASLSNLHN). Ser-9 and Ser-20 each carry phosphoserine. Positions 60-112 (IAETGISGGVDRREAQRLRRRNQQLEEENNLLRLKVDILLDMLSETTAESHLM) are minimal region for the interaction with PKD2. A coiled-coil region spans residues 68 to 125 (GVDRREAQRLRRRNQQLEEENNLLRLKVDILLDMLSETTAESHLMEKELDELKSVSRR). Residues 77–98 (LRRRNQQLEEENNLLRLKVDIL) are leucine-zipper; mediates homodimerization.

The protein belongs to the chibby family. In terms of assembly, homodimer. Homodimerization is essential for nuclear localization and interaction with KPNA4 but is dispensable for interaction with CTNNB1. Interacts with polycystin-2/PKD2 and GM130. Interacts with the C-terminal region of CTNNB1. Interacts (C-terminus) with TCIM (C-terminus), TCIM competes with CTNNB1 for the interaction with CBY1. Interacts with FAM92A; this interaction facilitates targeting of FAM92A to cilium basal body. Interacts with CIBAR2. Interacts with KPNA4.

The protein resides in the nucleus speckle. Its subcellular location is the cytoplasm. It localises to the cytoskeleton. It is found in the cilium basal body. The protein localises to the microtubule organizing center. The protein resides in the centrosome. Its subcellular location is the centriole. It localises to the golgi apparatus. It is found in the trans-Golgi network. The protein localises to the cell projection. The protein resides in the cilium. Its subcellular location is the flagellum. It localises to the nucleus. In terms of biological role, inhibits the Wnt/Wingless pathway by binding to CTNNB1/beta-catenin and inhibiting beta-catenin-mediated transcriptional activation through competition with TCF/LEF transcription factors. Has also been shown to play a role in regulating the intracellular trafficking of polycystin-2/PKD2 and possibly of other intracellular proteins. Promotes adipocyte and cardiomyocyte differentiation. The chain is Protein chibby homolog 1 (CBY1) from Bos taurus (Bovine).